Reading from the N-terminus, the 380-residue chain is Cytochrome b (380 aa).

A run of 4 helical transmembrane segments spans residues 34-54 (FGSLLGICLMTQILTGLLLAM), 78-99 (WLIRNLHANGASFFFICIYLHI), 114-134 (WNTGILLLLTLMATAFVGYVL), and 179-199 (FFALHFLLPFMIAGLTLIHLT). The heme b site is built by histidine 84 and histidine 98. Residues histidine 183 and histidine 197 each contribute to the heme b site. Histidine 202 contacts a ubiquinone. 4 consecutive transmembrane segments (helical) span residues 227–247 (LKDILGFTLMFLPLTALALFS), 289–309 (LGGVLALAASVLVLFLSPLLH), 321–341 (LSQLLFWLLVTNLFILTWIGS), and 348–368 (FIIIGQLASITYFTILLVLFP).

It belongs to the cytochrome b family. As to quaternary structure, the cytochrome bc1 complex contains 11 subunits: 3 respiratory subunits (MT-CYB, CYC1 and UQCRFS1), 2 core proteins (UQCRC1 and UQCRC2) and 6 low-molecular weight proteins (UQCRH/QCR6, UQCRB/QCR7, UQCRQ/QCR8, UQCR10/QCR9, UQCR11/QCR10 and a cleavage product of UQCRFS1). This cytochrome bc1 complex then forms a dimer. Requires heme b as cofactor.

The protein resides in the mitochondrion inner membrane. Functionally, component of the ubiquinol-cytochrome c reductase complex (complex III or cytochrome b-c1 complex) that is part of the mitochondrial respiratory chain. The b-c1 complex mediates electron transfer from ubiquinol to cytochrome c. Contributes to the generation of a proton gradient across the mitochondrial membrane that is then used for ATP synthesis. This chain is Cytochrome b (MT-CYB), found in Thalassarche impavida (Albatross).